A 421-amino-acid polypeptide reads, in one-letter code: Testin (421 aa).

The 108-residue stretch at M92–G199 folds into the PET domain. A disordered region spans residues E133–C164. Basic and acidic residues predominate over residues P155–C164. 3 LIM zinc-binding domains span residues Y234 to E297, P299 to V359, and Q362 to S421.

Belongs to the prickle / espinas / testin family. As to quaternary structure, interacts via LIM domain 1 with ZYX. Interacts (via LIM domain 3) with ENAH and VASP. Interacts with ALKBH4, talin, actin, alpha-actinin, GRIP1 and PXN. Interacts (via LIM domain 2) with ACTL7A (via N-terminus). Heterodimer with ACTL7A; the heterodimer interacts with ENAH to form a heterotrimer.

It is found in the cytoplasm. Its subcellular location is the cell junction. It localises to the focal adhesion. Functionally, scaffold protein that may play a role in cell adhesion, cell spreading and in the reorganization of the actin cytoskeleton. Plays a role in the regulation of cell proliferation. May act as a tumor suppressor. This Oryctolagus cuniculus (Rabbit) protein is Testin (TES).